A 418-amino-acid polypeptide reads, in one-letter code: Ankyrin repeat domain-containing protein 61 (418 aa).

ANK repeat units lie at residues 27 to 57 (ALHSKLYEAIMREDCTTIEVLLRNHPVNQPI), 75 to 104 (ESIIPIHLAAKYHKAQSLLCLLRHGADPEV), 132 to 161 (NRTHRILTDIQNSSITCLRILCAHGAQVNT), 167 to 196 (NKRSPLHLAIAYGCYPVLSILTQNGADVNA), 200 to 229 (ASMTPLHMAANMLNKEMMETLIAYGANVNC), 234 to 273 (TGNTPLKLAVCTASSKAGRLLGAGVSCIRLLLTHGAKVNA), 277 to 306 (KGQTAIHEACFGGREAIINLLLEFEANVNI), and 310 to 343 (NGESPIYMYLQRSCNVRDTALLARLLYHTYPLRM).

The polypeptide is Ankyrin repeat domain-containing protein 61 (ANKRD61) (Homo sapiens (Human)).